Consider the following 274-residue polypeptide: MSNLQTIIEDAFERRAEITPSTASAEIKDAVFSVLADLDSGKLRVAERTDGQNWVTHQWIKKAVLLSFRLEDNVLLDDGVTKYFDKVPPKFANYTEADFKAGGFRVVPNAIVRRGSFIAKNAVLMPSYVNIGAYVGEGTMVDTWATVGSCAQIGKNVHLSGGVGIGGVLEPVQAGPTIIGDNCFIGARSEVVEGVIVEDNCVISMGVYIGQSTKIYDRETGEIHYGRVPTGSVVVSGNLPSKDGSYSLYCAVIVKKVDEKTLGKVGINELLRGI.

Substrate is bound by residues R105 and D142.

This sequence belongs to the transferase hexapeptide repeat family. As to quaternary structure, homotrimer.

The protein resides in the cytoplasm. It catalyses the reaction (S)-2,3,4,5-tetrahydrodipicolinate + succinyl-CoA + H2O = (S)-2-succinylamino-6-oxoheptanedioate + CoA. The protein operates within amino-acid biosynthesis; L-lysine biosynthesis via DAP pathway; LL-2,6-diaminopimelate from (S)-tetrahydrodipicolinate (succinylase route): step 1/3. This Methylobacillus flagellatus (strain ATCC 51484 / DSM 6875 / VKM B-1610 / KT) protein is 2,3,4,5-tetrahydropyridine-2,6-dicarboxylate N-succinyltransferase.